A 123-amino-acid polypeptide reads, in one-letter code: Defensin beta 118 (123 aa).

A signal peptide spans 1–19 (MKLLLLALPMLVLLPQVIP). 3 cysteine pairs are disulfide-bonded: cysteine 27/cysteine 54, cysteine 34/cysteine 48, and cysteine 38/cysteine 55. Disordered regions lie at residues 59–79 (NEDH…STPG) and 102–123 (MVEE…HHSS). A propeptide spanning residues 64–123 (QVPTTSPTPLSDSTPGSIDDILTVRFTTDYFEVSSKKDMVEESEAGWGTQTSLPDVHHSS) is cleaved from the precursor. Low complexity predominate over residues 66-79 (PTTSPTPLSDSTPG).

Belongs to the beta-defensin family. The three-dimensional structure formed by the three intramolecular disulfide bridges is indispensable for antimicrobial activity.

Its subcellular location is the secreted. Its function is as follows. Host defense peptide that exhibits antimicrobial activity against both Gram-negative bacteria, such as E.coli and S.typhimurium, and Gram-positive bacteria, such as S.aureus and B.subtilis. Inhibits cell adhesion of E.coli on intestinal epithelial enterocytes. Causes rapid permeabilization of both the outer and inner membrane of E.coli, leading to morphological alterations on the bacterial surface. Binds to bacterial lipopolysaccharides (LPS) with high affinity, and may thereby be involved in immunoregulation through LPS neutralization. May contribute to epididymal innate immunity and protect the sperm against attack by microorganisms. The sequence is that of Defensin beta 118 (DEFB118) from Hylobates lar (Lar gibbon).